The chain runs to 392 residues: MAATMTVEEVRKAQRAEGPATVLAIGTATPANCVYQADYPDYYFKITKSDHMADLKEKFKRMCDKSQIRKRYMHLTEEILQDNPNMCAYMAPSLDARQDIVVVEVPKLGKAAAQKAIKEWGQPRSKITHLVFCTTSGVDMPGADYQLTKMLGLRPSVKRLMMYQQGCFAGGTVLRLAKDLAENNRGARVLVVCSEITAVTFRGPHEFDSLVGQALFGDGAAAVIVGADPDESVERPLFQLVSASQTILPDSEGAIDGHLREVGLTFHLLKDVPGLISKNIERALEDAFKPLGIDDWNSVFWIAHPGGPAILDMVEAKVNLNKERMRATRHVLSEYGNMSSACVLFIMDEMRKRSAEDGHTTTGEGMDWGVLFGFGPGLTVETVVLHSVPVTA.

Cys167 is an active-site residue.

Belongs to the thiolase-like superfamily. Chalcone/stilbene synthases family.

The catalysed reaction is (E)-4-coumaroyl-CoA + 3 malonyl-CoA + 3 H(+) = 2',4,4',6'-tetrahydroxychalcone + 3 CO2 + 4 CoA. The protein operates within secondary metabolite biosynthesis; flavonoid biosynthesis. The primary product of this enzyme is 4,2',4',6'-tetrahydroxychalcone (also termed naringenin-chalcone or chalcone) which can under specific conditions spontaneously isomerize into naringenin. This is Chalcone synthase 1 (CHS1) from Secale cereale (Rye).